The following is a 270-amino-acid chain: Putative pyruvate, phosphate dikinase regulatory protein (270 aa).

148–155 (GISRTSKT) contributes to the ADP binding site.

It belongs to the pyruvate, phosphate/water dikinase regulatory protein family. PDRP subfamily.

It catalyses the reaction N(tele)-phospho-L-histidyl/L-threonyl-[pyruvate, phosphate dikinase] + ADP = N(tele)-phospho-L-histidyl/O-phospho-L-threonyl-[pyruvate, phosphate dikinase] + AMP + H(+). It carries out the reaction N(tele)-phospho-L-histidyl/O-phospho-L-threonyl-[pyruvate, phosphate dikinase] + phosphate + H(+) = N(tele)-phospho-L-histidyl/L-threonyl-[pyruvate, phosphate dikinase] + diphosphate. Bifunctional serine/threonine kinase and phosphorylase involved in the regulation of the pyruvate, phosphate dikinase (PPDK) by catalyzing its phosphorylation/dephosphorylation. This chain is Putative pyruvate, phosphate dikinase regulatory protein, found in Bacillus cereus (strain 03BB102).